Consider the following 363-residue polypeptide: Galactokinase (363 aa).

Position 16-19 (16-19) interacts with substrate; that stretch reads EHTD. Residues serine 50 and 103–109 contribute to the ATP site; that span reads GSGLSSS. The Mg(2+) site is built by serine 109 and glutamate 141. Aspartate 153 acts as the Proton acceptor in catalysis. Residue tyrosine 205 coordinates substrate.

The protein belongs to the GHMP kinase family. GalK subfamily.

The protein localises to the cytoplasm. The catalysed reaction is alpha-D-galactose + ATP = alpha-D-galactose 1-phosphate + ADP + H(+). It participates in carbohydrate metabolism; galactose metabolism. Catalyzes the transfer of the gamma-phosphate of ATP to D-galactose to form alpha-D-galactose-1-phosphate (Gal-1-P). The chain is Galactokinase from Mycobacterium tuberculosis (strain ATCC 25177 / H37Ra).